The sequence spans 766 residues: Serine/threonine-protein kinase tousled-like 1 (766 aa).

The disordered stretch occupies residues Met1–Asp198. A compositionally biased stretch (low complexity) spans Ser20–Ser33. Thr38 is subject to Phosphothreonine. The segment covering Arg43 to Glu64 has biased composition (basic and acidic residues). Ser54, Ser77, and Ser80 each carry phosphoserine. A compositionally biased stretch (low complexity) spans Thr68–Ala85. Over residues Ala87–Ser103 the composition is skewed to polar residues. The segment covering Ser105–Arg121 has biased composition (basic and acidic residues). Phosphoserine occurs at positions 134, 159, 174, and 176. The segment covering Ser170–Thr192 has biased composition (low complexity). Residues Asn229 to Glu280 are a coiled coil. The tract at residues Lys344 to Pro381 is disordered. Over residues Thr353–Glu365 the composition is skewed to polar residues. Residues His397–Gln445 are a coiled coil. The region spanning Tyr456–Leu734 is the Protein kinase domain. ATP-binding positions include Leu462–Val470 and Lys485. Catalysis depends on Asp586, which acts as the Proton acceptor. Residue Ser743 is modified to Phosphoserine. The interval Gly745 to Tyr766 is disordered.

The protein belongs to the protein kinase superfamily. Ser/Thr protein kinase family. Heterodimer with TLK2. It depends on Mg(2+) as a cofactor. Ubiquitously expressed in all tissues examined.

The protein resides in the nucleus. The enzyme catalyses L-seryl-[protein] + ATP = O-phospho-L-seryl-[protein] + ADP + H(+). It carries out the reaction L-threonyl-[protein] + ATP = O-phospho-L-threonyl-[protein] + ADP + H(+). With respect to regulation, cell-cycle regulated, maximal activity in S-phase. Inactivated by phosphorylation at Ser-743, potentially by CHEK1. Rapidly and transiently inhibited by phosphorylation following the generation of DNA double-stranded breaks during S-phase. This is cell cycle checkpoint and ATM-pathway dependent and appears to regulate processes involved in chromatin assembly. Isoform 3 protects the cells from the ionizing radiation by facilitating the repair of DSBs. In vitro, phosphorylates histone H3 at 'Ser-10'. The polypeptide is Serine/threonine-protein kinase tousled-like 1 (Tlk1) (Mus musculus (Mouse)).